Consider the following 291-residue polypeptide: N-acetylmannosamine kinase (291 aa).

Residues 5 to 12 (AIDIGGTK) and 132 to 139 (GVGGGVVC) each bind ATP. 4 residues coordinate Zn(2+): histidine 156, cysteine 166, cysteine 168, and cysteine 173.

It belongs to the ROK (NagC/XylR) family. NanK subfamily. In terms of assembly, homodimer.

It catalyses the reaction an N-acyl-D-mannosamine + ATP = an N-acyl-D-mannosamine 6-phosphate + ADP + H(+). It participates in amino-sugar metabolism; N-acetylneuraminate degradation; D-fructose 6-phosphate from N-acetylneuraminate: step 2/5. Catalyzes the phosphorylation of N-acetylmannosamine (ManNAc) to ManNAc-6-P. The sequence is that of N-acetylmannosamine kinase from Salmonella dublin (strain CT_02021853).